Consider the following 132-residue polypeptide: Fatty acid-binding protein, brain (132 aa).

Val-2 carries the post-translational modification N-acetylvaline. An a fatty acid-binding site is contributed by 127–129; that stretch reads RHY.

The protein belongs to the calycin superfamily. Fatty-acid binding protein (FABP) family. Expressed in brain and other neural tissues.

It localises to the cytoplasm. B-FABP could be involved in the transport of a so far unknown hydrophobic ligand with potential morphogenic activity during CNS development. It is required for the establishment of the radial glial fiber system in developing brain, a system that is necessary for the migration of immature neurons to establish cortical layers. This is Fatty acid-binding protein, brain (FABP7) from Homo sapiens (Human).